The chain runs to 333 residues: Glyceraldehyde-3-phosphate dehydrogenase (333 aa).

Residues 12-13 (RI), Asp36, Arg80, and Ser120 contribute to the NAD(+) site. D-glyceraldehyde 3-phosphate is bound by residues 150 to 152 (SCT), Thr181, Arg196, 209 to 210 (TG), and Arg232. Residue Cys151 is the Nucleophile of the active site. Asn314 is a binding site for NAD(+).

The protein belongs to the glyceraldehyde-3-phosphate dehydrogenase family. As to quaternary structure, homotetramer.

The protein resides in the cytoplasm. The enzyme catalyses D-glyceraldehyde 3-phosphate + phosphate + NAD(+) = (2R)-3-phospho-glyceroyl phosphate + NADH + H(+). It participates in carbohydrate degradation; glycolysis; pyruvate from D-glyceraldehyde 3-phosphate: step 1/5. In terms of biological role, catalyzes the oxidative phosphorylation of glyceraldehyde 3-phosphate (G3P) to 1,3-bisphosphoglycerate (BPG) using the cofactor NAD. The first reaction step involves the formation of a hemiacetal intermediate between G3P and a cysteine residue, and this hemiacetal intermediate is then oxidized to a thioester, with concomitant reduction of NAD to NADH. The reduced NADH is then exchanged with the second NAD, and the thioester is attacked by a nucleophilic inorganic phosphate to produce BPG. The chain is Glyceraldehyde-3-phosphate dehydrogenase (gapB) from Cereibacter sphaeroides (Rhodobacter sphaeroides).